Here is a 238-residue protein sequence, read N- to C-terminus: Glycerol-3-phosphate acyltransferase (238 aa).

Helical transmembrane passes span 5-25, 61-81, 88-108, 125-145, 149-169, and 194-214; these read VIFGSNILLILVAYFIGSINF, FLVFFLDVSKSFWFAIISAIL, FGAVITQLVVLFVIIGHVFPI, IASLNIILAIIGGIIFFAMIF, IVSLGSFITPFILVIFMIIPW, and AWYLSSLFLFLAALIILFTHI.

Belongs to the PlsY family. Probably interacts with PlsX.

It is found in the cell membrane. It catalyses the reaction an acyl phosphate + sn-glycerol 3-phosphate = a 1-acyl-sn-glycero-3-phosphate + phosphate. Its pathway is lipid metabolism; phospholipid metabolism. Functionally, catalyzes the transfer of an acyl group from acyl-phosphate (acyl-PO(4)) to glycerol-3-phosphate (G3P) to form lysophosphatidic acid (LPA). This enzyme utilizes acyl-phosphate as fatty acyl donor, but not acyl-CoA or acyl-ACP. The polypeptide is Glycerol-3-phosphate acyltransferase (Mycoplasma mobile (strain ATCC 43663 / 163K / NCTC 11711) (Mesomycoplasma mobile)).